Reading from the N-terminus, the 661-residue chain is UvrABC system protein B (661 aa).

A Helicase ATP-binding domain is found at 24 to 209 (NGLNKGYRFQ…IFPSYQDEGI (186 aa)). Residue 37 to 44 (GVTGSGKT) coordinates ATP. A Beta-hairpin motif is present at residues 90 to 113 (YYDYYQPEAYVPTKDLYIEKSADI). One can recognise a Helicase C-terminal domain in the interval 430-594 (DLVNEIVQVK…IIKPLMEDIF (165 aa)). In terms of domain architecture, UVR spans 622 to 657 (EEYAALLEEEMYKAASELRYEDAARLRDELFKIKEE).

It belongs to the UvrB family. In terms of assembly, forms a heterotetramer with UvrA during the search for lesions. Interacts with UvrC in an incision complex.

It localises to the cytoplasm. In terms of biological role, the UvrABC repair system catalyzes the recognition and processing of DNA lesions. A damage recognition complex composed of 2 UvrA and 2 UvrB subunits scans DNA for abnormalities. Upon binding of the UvrA(2)B(2) complex to a putative damaged site, the DNA wraps around one UvrB monomer. DNA wrap is dependent on ATP binding by UvrB and probably causes local melting of the DNA helix, facilitating insertion of UvrB beta-hairpin between the DNA strands. Then UvrB probes one DNA strand for the presence of a lesion. If a lesion is found the UvrA subunits dissociate and the UvrB-DNA preincision complex is formed. This complex is subsequently bound by UvrC and the second UvrB is released. If no lesion is found, the DNA wraps around the other UvrB subunit that will check the other stand for damage. This is UvrABC system protein B from Fervidobacterium nodosum (strain ATCC 35602 / DSM 5306 / Rt17-B1).